Consider the following 202-residue polypeptide: Cytochrome c oxidase assembly protein CtaG (202 aa).

The Cytoplasmic segment spans residues 1 to 14; it reads MTSPANPSEVTRDR. The helical; Signal-anchor for type II membrane protein transmembrane segment at 15–37 threads the bilayer; the sequence is RNRGVAFVCAGVFVAMVGMSFAA. At 38–202 the chain is on the periplasmic side; that stretch reads VPLYRLFCQV…GAAKTQKLGG (165 aa).

The protein belongs to the COX11/CtaG family.

The protein localises to the cell inner membrane. Functionally, exerts its effect at some terminal stage of cytochrome c oxidase synthesis, probably by being involved in the insertion of the copper B into subunit I. This is Cytochrome c oxidase assembly protein CtaG from Chelativorans sp. (strain BNC1).